Consider the following 419-residue polypeptide: MTTQLEQAWELAKQRFAAVGIDVEEALRQLDRLPVSMHCWQGDDVSGFENPEGSLTGGIQAIGNYPGKARNASELRADLEQAMRLIPGPKRLNLHAIYLESDTPVSRDQIKPEHFKNWVEWAKANQLGLDFNPSCFSHPLSADGFTLSHPDDSIRQFWIDHCKASRRVSAYFGEQLGTPSVMNIWIPDGMKDITVDRLAPRQRLLAALDEVISEKLDPAHHIDAVESKLFGIGAESYTVGSNEFYMGYATSRQTALCLDAGHFHPTEVISDKISAAMLYVPQLLLHVSRPVRWDSDHVVLLDDETQAIASEIVRHDLFDRVHIGLDFFDASINRIAAWVIGTRNMKKALLRALLEPTAELRKLEAAGDYTARLALLEEQKSLPWQAVWEMYCQRHDTPAGSEWLESVRAYEKAILSQRG.

Residues His262, Asp294, and Asp296 each coordinate Mn(2+).

The protein belongs to the rhamnose isomerase family. In terms of assembly, homotetramer. The cofactor is Mn(2+).

The protein resides in the cytoplasm. It carries out the reaction L-rhamnopyranose = L-rhamnulose. The protein operates within carbohydrate degradation; L-rhamnose degradation; glycerone phosphate from L-rhamnose: step 1/3. In terms of biological role, catalyzes the interconversion of L-rhamnose and L-rhamnulose. The polypeptide is L-rhamnose isomerase (Shigella sonnei (strain Ss046)).